A 499-amino-acid chain; its full sequence is Catalase (499 aa).

Positions M1 to G25 are disordered. A compositionally biased stretch (polar residues) spans M7–T23. Catalysis depends on residues H55 and N127. Position 337 (Y337) interacts with heme.

Belongs to the catalase family. Homotetramer. The cofactor is heme.

Its subcellular location is the periplasm. It carries out the reaction 2 H2O2 = O2 + 2 H2O. Its function is as follows. Decomposes hydrogen peroxide into water and oxygen; serves to protect cells from the toxic effects of hydrogen peroxide. This Brucella abortus biovar 1 (strain 9-941) protein is Catalase (katA).